A 548-amino-acid polypeptide reads, in one-letter code: Probable delta-1-pyrroline-5-carboxylate dehydrogenase (548 aa).

Glu-298 (proton acceptor) is an active-site residue. The active-site Nucleophile is the Cys-332. A phosphoserine mark is found at Ser-391, Ser-394, and Ser-396.

The protein belongs to the aldehyde dehydrogenase family.

It catalyses the reaction L-glutamate 5-semialdehyde + NAD(+) + H2O = L-glutamate + NADH + 2 H(+). The protein operates within amino-acid degradation; L-proline degradation into L-glutamate; L-glutamate from L-proline: step 2/2. The chain is Probable delta-1-pyrroline-5-carboxylate dehydrogenase from Schizosaccharomyces pombe (strain 972 / ATCC 24843) (Fission yeast).